The following is a 486-amino-acid chain: Malonate-semialdehyde dehydrogenase 2 (486 aa).

Positions 154, 178, 181, 182, and 231 each coordinate NAD(+). Cys286 functions as the Nucleophile in the catalytic mechanism. Position 386 (Glu386) interacts with NAD(+).

Belongs to the aldehyde dehydrogenase family. IolA subfamily. Homotetramer.

The catalysed reaction is 3-oxopropanoate + NAD(+) + CoA + H2O = hydrogencarbonate + acetyl-CoA + NADH + H(+). The enzyme catalyses 2-methyl-3-oxopropanoate + NAD(+) + CoA + H2O = propanoyl-CoA + hydrogencarbonate + NADH + H(+). It participates in polyol metabolism; myo-inositol degradation into acetyl-CoA; acetyl-CoA from myo-inositol: step 7/7. Its function is as follows. Catalyzes the oxidation of malonate semialdehyde (MSA) and methylmalonate semialdehyde (MMSA) into acetyl-CoA and propanoyl-CoA, respectively. Is involved in a myo-inositol catabolic pathway. Bicarbonate, and not CO2, is the end-product of the enzymatic reaction. The chain is Malonate-semialdehyde dehydrogenase 2 from Oceanobacillus iheyensis (strain DSM 14371 / CIP 107618 / JCM 11309 / KCTC 3954 / HTE831).